We begin with the raw amino-acid sequence, 357 residues long: uncharacterized protein (357 aa).

The Radical SAM core domain maps to 27–242 (HFGNTVTFER…VSSVRLNFPK (216 aa)). Positions 44, 50, and 53 each coordinate [4Fe-4S] cluster.

[4Fe-4S] cluster is required as a cofactor.

This is an uncharacterized protein from Methanocaldococcus jannaschii (strain ATCC 43067 / DSM 2661 / JAL-1 / JCM 10045 / NBRC 100440) (Methanococcus jannaschii).